We begin with the raw amino-acid sequence, 271 residues long: Formamidopyrimidine-DNA glycosylase (271 aa).

Catalysis depends on P2, which acts as the Schiff-base intermediate with DNA. Catalysis depends on E3, which acts as the Proton donor. K56 (proton donor; for beta-elimination activity) is an active-site residue. DNA is bound by residues H89, R107, and R151. The FPG-type zinc-finger motif lies at 236–270; that stretch reads MVYARQGQPCRVCATPIKSLRQGQRSTFYCPHCQK. Residue R260 is the Proton donor; for delta-elimination activity of the active site.

Belongs to the FPG family. In terms of assembly, monomer. It depends on Zn(2+) as a cofactor.

It carries out the reaction Hydrolysis of DNA containing ring-opened 7-methylguanine residues, releasing 2,6-diamino-4-hydroxy-5-(N-methyl)formamidopyrimidine.. The catalysed reaction is 2'-deoxyribonucleotide-(2'-deoxyribose 5'-phosphate)-2'-deoxyribonucleotide-DNA = a 3'-end 2'-deoxyribonucleotide-(2,3-dehydro-2,3-deoxyribose 5'-phosphate)-DNA + a 5'-end 5'-phospho-2'-deoxyribonucleoside-DNA + H(+). Its function is as follows. Involved in base excision repair of DNA damaged by oxidation or by mutagenic agents. Acts as a DNA glycosylase that recognizes and removes damaged bases. Has a preference for oxidized purines, such as 7,8-dihydro-8-oxoguanine (8-oxoG). Has AP (apurinic/apyrimidinic) lyase activity and introduces nicks in the DNA strand. Cleaves the DNA backbone by beta-delta elimination to generate a single-strand break at the site of the removed base with both 3'- and 5'-phosphates. The polypeptide is Formamidopyrimidine-DNA glycosylase (Albidiferax ferrireducens (strain ATCC BAA-621 / DSM 15236 / T118) (Rhodoferax ferrireducens)).